The primary structure comprises 515 residues: NADH-ubiquinone oxidoreductase chain 2 (515 aa).

5 helical membrane passes run 63-83 (WPIG…NSGS), 250-270 (VFIY…CSIA), 299-319 (FVLV…GLFI), 356-376 (AITF…AGFC), and 379-399 (FYLF…VGVV).

The protein belongs to the complex I subunit 2 family.

It is found in the mitochondrion inner membrane. It catalyses the reaction a ubiquinone + NADH + 5 H(+)(in) = a ubiquinol + NAD(+) + 4 H(+)(out). In terms of biological role, core subunit of the mitochondrial membrane respiratory chain NADH dehydrogenase (Complex I) that is believed to belong to the minimal assembly required for catalysis. Complex I functions in the transfer of electrons from NADH to the respiratory chain. The immediate electron acceptor for the enzyme is believed to be ubiquinone. This chain is NADH-ubiquinone oxidoreductase chain 2 (ND2), found in Beta vulgaris (Sugar beet).